A 190-amino-acid chain; its full sequence is ADP-ribosylation factor-like protein 6 (190 aa).

G2 carries N-myristoyl glycine lipidation. Residues 24–31 (GLDNSGKT), 69–73 (DMAGQ), and 130–133 (NKMD) each bind GTP.

The protein belongs to the small GTPase superfamily. Arf family. In terms of tissue distribution, specifically expressed in ciliated cells.

Its subcellular location is the cytoplasm. This is ADP-ribosylation factor-like protein 6 from Caenorhabditis elegans.